Reading from the N-terminus, the 412-residue chain is Glucose-1-phosphate adenylyltransferase (412 aa).

Alpha-D-glucose 1-phosphate-binding positions include glycine 169, 184 to 185 (EK), and serine 201.

It belongs to the bacterial/plant glucose-1-phosphate adenylyltransferase family. As to quaternary structure, homotetramer.

It carries out the reaction alpha-D-glucose 1-phosphate + ATP + H(+) = ADP-alpha-D-glucose + diphosphate. It functions in the pathway glycan biosynthesis; glycogen biosynthesis. In terms of biological role, involved in the biosynthesis of ADP-glucose, a building block required for the elongation reactions to produce glycogen. Catalyzes the reaction between ATP and alpha-D-glucose 1-phosphate (G1P) to produce pyrophosphate and ADP-Glc. In Geobacter metallireducens (strain ATCC 53774 / DSM 7210 / GS-15), this protein is Glucose-1-phosphate adenylyltransferase.